The following is a 60-amino-acid chain: Homeobox protein CHOX-CAD2 (60 aa).

The segment at residues 1–60 is a DNA-binding region (homeobox); it reads KEKYRVVYTDHQRLELEKEFHCNRYITIRRKSELAVNLGLSERQVKSWFQNRRAKERKII.

The protein belongs to the Caudal homeobox family.

The protein localises to the nucleus. This is Homeobox protein CHOX-CAD2 (CHOX-CAD2) from Gallus gallus (Chicken).